The primary structure comprises 588 residues: MQEDGIAEPGLLLPRYPGDDTRPTNKKELLGWYSYGWAAEVFTVCAMGSFLPITLEQMARERGVLLSDKTTPCTAIWKTPESSNTSWQNSSPAAAGQCIVYILGAEINTASFAMYTFSVSVLIQAILIISMSGAADHGSYRKTLLVSFAAIGSICTMLILAVTPKVYLLGGLFAIVANTCLGASFVLLNSFLPLLVRYHPSLLKEESGYMVRSPTENSGQPIATDCFSNDDPRAALLQGDGMTPEDTREFISSSNTSKELTISTRISSYGIGIGYIGAVFLQGICILVIVQTRQTTFSLRLVLFLIGLWWFIFTIPAAFWLRPRPGPPLLRAQDGKAYQSWLGYMAYAWKSLGRTAMRTRHLKDILLFLASWFLLSDGIATVSGTAVLFAKTQLNMEPAALGMINVITMISGVFGAFSWSYVSRVLNLRASQTIIACIFLFELVPLYGLLGFIPAIKNLGFLGLQQPWEMFPLGVIYGLVMGGLSSYCRSFFGQLIPPGYEASFYSLYAITDKGSSVFGPAIVGFITDHYGEIRPAFFFLAILILLPLPLMLLVDADRGKRDALALAEVLEARSSLEQRDYGTFSQQQ.

Residues 35–55 (YGWAAEVFTVCAMGSFLPITL) form a helical membrane-spanning segment. N84 is a glycosylation site (N-linked (GlcNAc...) asparagine). The next 3 membrane-spanning stretches (helical) occupy residues 109-129 (TASF…ILII), 144-164 (LLVS…AVTP), and 168-188 (LLGG…FVLL). N-linked (GlcNAc...) asparagine glycosylation occurs at N255. Helical transmembrane passes span 270-290 (GIGI…LVIV), 301-321 (LVLF…AFWL), 365-385 (ILLF…VSGT), 399-419 (AALG…AFSW), 434-454 (IIAC…GFIP), 471-493 (FPLG…SFFG), 507-527 (LYAI…GFIT), and 536-556 (AFFF…LVDA).

It belongs to the ATG22 family.

The protein localises to the vacuole membrane. Its function is as follows. Vacuolar effluxer which mediate the efflux of amino acids resulting from autophagic degradation. The release of autophagic amino acids allows the maintenance of protein synthesis and viability during nitrogen starvation. The chain is Autophagy-related protein 22-1 (atg22-1) from Emericella nidulans (strain FGSC A4 / ATCC 38163 / CBS 112.46 / NRRL 194 / M139) (Aspergillus nidulans).